We begin with the raw amino-acid sequence, 397 residues long: L-asparaginase-like protein GD25160 (397 aa).

A signal peptide spans Met-1 to Ser-22. 3 cysteine pairs are disulfide-bonded: Cys-90–Cys-95, Cys-189–Cys-205, and Cys-344–Cys-371.

Belongs to the Ntn-hydrolase family.

The chain is L-asparaginase-like protein GD25160 from Drosophila simulans (Fruit fly).